Here is a 327-residue protein sequence, read N- to C-terminus: Pyruvate dehydrogenase E1 component subunit beta (327 aa).

Position 60 (E60) interacts with thiamine diphosphate. K(+) contacts are provided by I113, A161, I162, and N166.

As to quaternary structure, heterodimer of an alpha and a beta chain. It depends on thiamine diphosphate as a cofactor.

The protein resides in the plastid. It localises to the chloroplast. The catalysed reaction is N(6)-[(R)-lipoyl]-L-lysyl-[protein] + pyruvate + H(+) = N(6)-[(R)-S(8)-acetyldihydrolipoyl]-L-lysyl-[protein] + CO2. In terms of biological role, the pyruvate dehydrogenase complex catalyzes the overall conversion of pyruvate to acetyl-CoA and CO(2). It contains multiple copies of three enzymatic components: pyruvate dehydrogenase (E1), dihydrolipoamide acetyltransferase (E2) and lipoamide dehydrogenase (E3). In Mesostigma viride (Green alga), this protein is Pyruvate dehydrogenase E1 component subunit beta (pdhB).